The primary structure comprises 94 residues: UPF0298 protein SEQ_1830 (94 aa).

The protein belongs to the UPF0298 family.

Its subcellular location is the cytoplasm. The chain is UPF0298 protein SEQ_1830 from Streptococcus equi subsp. equi (strain 4047).